The chain runs to 158 residues: NAD(P)H-quinone oxidoreductase subunit J, chloroplastic (158 aa).

Belongs to the complex I 30 kDa subunit family. In terms of assembly, NDH is composed of at least 16 different subunits, 5 of which are encoded in the nucleus.

Its subcellular location is the plastid. It is found in the chloroplast thylakoid membrane. The catalysed reaction is a plastoquinone + NADH + (n+1) H(+)(in) = a plastoquinol + NAD(+) + n H(+)(out). The enzyme catalyses a plastoquinone + NADPH + (n+1) H(+)(in) = a plastoquinol + NADP(+) + n H(+)(out). NDH shuttles electrons from NAD(P)H:plastoquinone, via FMN and iron-sulfur (Fe-S) centers, to quinones in the photosynthetic chain and possibly in a chloroplast respiratory chain. The immediate electron acceptor for the enzyme in this species is believed to be plastoquinone. Couples the redox reaction to proton translocation, and thus conserves the redox energy in a proton gradient. In Solanum bulbocastanum (Wild potato), this protein is NAD(P)H-quinone oxidoreductase subunit J, chloroplastic.